Here is a 492-residue protein sequence, read N- to C-terminus: Peptidyl-prolyl cis-trans isomerase-like 4 (492 aa).

Positions 1 to 161 constitute a PPIase cyclophilin-type domain; the sequence is MAVLLETTLG…QDIRINHTVI (161 aa). A disordered region spans residues 167–188; it reads DDPPDLLIPDRSPEPTREQLDS. A compositionally biased stretch (basic and acidic residues) spans 177–187; sequence RSPEPTREQLD. A Phosphoserine modification is found at Ser178. Thr182 bears the Phosphothreonine mark. Glycyl lysine isopeptide (Lys-Gly) (interchain with G-Cter in SUMO2) cross-links involve residues Lys201, Lys212, and Lys218. The RRM domain occupies 240 to 318; the sequence is NVLFVCKLNP…RRIHVDFSQS (79 aa). Residues Lys321 and Lys362 each participate in a glycyl lysine isopeptide (Lys-Gly) (interchain with G-Cter in SUMO2) cross-link. Disordered regions lie at residues 368–406 and 423–492; these read DEQAEDSKSSHSHTSKKHKKKTHHCSEEKEDEDYMPIKN and EESC…SKYR. Positions 377-390 are enriched in basic residues; that stretch reads SHSHTSKKHKKKTH. Position 393 is a phosphoserine (Ser393). Residue Lys405 forms a Glycyl lysine isopeptide (Lys-Gly) (interchain with G-Cter in SUMO2) linkage. The segment covering 426–452 has biased composition (basic and acidic residues); the sequence is CWEKQKSEKRDRTQNRSRSRSRERDGH. A Glycyl lysine isopeptide (Lys-Gly) (interchain with G-Cter in SUMO2) cross-link involves residue Lys460. Phosphoserine is present on Ser471. Basic and acidic residues predominate over residues 482-492; the sequence is KSKDKEKSKYR.

It belongs to the cyclophilin-type PPIase family. PPIL4 subfamily. In terms of tissue distribution, abundantly expressed in kidney but has a ubiquitously low expression pattern in other adult tissues.

The protein resides in the nucleus. The catalysed reaction is [protein]-peptidylproline (omega=180) = [protein]-peptidylproline (omega=0). In terms of biological role, PPIases accelerate the folding of proteins. It catalyzes the cis-trans isomerization of proline imidic peptide bonds in oligopeptides. In Homo sapiens (Human), this protein is Peptidyl-prolyl cis-trans isomerase-like 4 (PPIL4).